A 213-amino-acid chain; its full sequence is Adenylate kinase (213 aa).

10 to 15 (GSGKGT) is a binding site for ATP. The segment at 30–59 (SVGDLLRNIISSSSELGKKIKGTVESGNLI) is NMP. AMP contacts are provided by residues Arg36, 57-59 (NLI), 83-86 (GFPR), and Gln90. Residues 125 to 160 (NRLACLDCKNIYSVSSFKSTTCAKCKSTRLEKRIDD) form an LID region. Arg126 serves as a coordination point for ATP. 2 residues coordinate Zn(2+): Cys129 and Cys132. ATP is bound at residue 135–136 (IY). Zn(2+) contacts are provided by Cys146 and Cys149. 2 residues coordinate AMP: Arg157 and Arg169. Leu195 lines the ATP pocket.

Belongs to the adenylate kinase family. As to quaternary structure, monomer.

The protein resides in the cytoplasm. The enzyme catalyses AMP + ATP = 2 ADP. Its pathway is purine metabolism; AMP biosynthesis via salvage pathway; AMP from ADP: step 1/1. Functionally, catalyzes the reversible transfer of the terminal phosphate group between ATP and AMP. Plays an important role in cellular energy homeostasis and in adenine nucleotide metabolism. This chain is Adenylate kinase, found in Wolbachia pipientis wMel.